Here is a 277-residue protein sequence, read N- to C-terminus: Radial spoke head protein 9 homolog (277 aa).

Belongs to the flagellar radial spoke RSP9 family. In terms of assembly, component of axonemal radial spoke complexes.

Its subcellular location is the cytoplasm. It is found in the cytoskeleton. It localises to the cilium axoneme. The protein resides in the flagellum axoneme. The protein localises to the cell projection. Its subcellular location is the kinocilium. Functionally, functions as part of axonemal radial spoke complexes that play an important part in the motility of sperm and cilia. Essential for both the radial spoke head assembly and the central pair microtubule stability in ependymal motile cilia. Required for motility of olfactory and neural cilia and for the structural integrity of ciliary axonemes in both 9+0 and 9+2 motile cilia. The sequence is that of Radial spoke head protein 9 homolog (rsph9) from Xenopus tropicalis (Western clawed frog).